The chain runs to 176 residues: Large ribosomal subunit protein uL10 (176 aa).

Belongs to the universal ribosomal protein uL10 family. As to quaternary structure, part of the ribosomal stalk of the 50S ribosomal subunit. The N-terminus interacts with L11 and the large rRNA to form the base of the stalk. The C-terminus forms an elongated spine to which L12 dimers bind in a sequential fashion forming a multimeric L10(L12)X complex.

In terms of biological role, forms part of the ribosomal stalk, playing a central role in the interaction of the ribosome with GTP-bound translation factors. This is Large ribosomal subunit protein uL10 from Natranaerobius thermophilus (strain ATCC BAA-1301 / DSM 18059 / JW/NM-WN-LF).